A 622-amino-acid polypeptide reads, in one-letter code: Lamin Dm0 (622 aa).

The interval 1 to 50 is disordered; it reads MSSKSRRAGTATPQPGNTSTPRPPSAGPQPPPPSTHSQTASSPLSPTRHS. At Ser-2 the chain carries N-acetylserine. Residues 2 to 56 are head; it reads SSKSRRAGTATPQPGNTSTPRPPSAGPQPPPPSTHSQTASSPLSPTRHSRVAEKV. A phosphothreonine mark is found at Thr-10, Thr-12, and Thr-20. The segment covering 21–34 has biased composition (pro residues); sequence PRPPSAGPQPPPPS. Ser-25 and Ser-34 each carry phosphoserine. Position 39 is a phosphothreonine (Thr-39). Phosphoserine is present on residues Ser-41, Ser-42, and Ser-45. Thr-47 bears the Phosphothreonine mark. The IF rod domain maps to 54–410; sequence EKVELQNLND…KLLVGEEARL (357 aa). A coil 1A region spans residues 55–91; it reads KVELQNLNDRLATYIDRVRNLETENSRLTIEVQTTRD. A linker 1 region spans residues 92-103; the sequence is TVTRETTNIKNI. A coil 1B region spans residues 104 to 241; the sequence is FEAELLETRR…QIHSQEINES (138 aa). Residue Ser-235 is modified to Phosphoserine. The tract at residues 242–265 is linker 2; the sequence is RRIKQTEYSEIDGRLSSEYDAKLK. Residue Tyr-249 is modified to Phosphotyrosine. Residues Ser-250 and Ser-311 each carry the phosphoserine modification. Positions 266-408 are coil 2; it reads QSLQELRAQY…YDKLLVGEEA (143 aa). The interval 409–619 is tail; the sequence is RLNITPATNT…GDPQQSNEKC (211 aa). 2 positions are modified to phosphothreonine: Thr-413 and Thr-435. A compositionally biased stretch (polar residues) spans 429–440; sequence RNSTRATPSRRT. Residues 429–448 form a disordered region; that stretch reads RNSTRATPSRRTPSAAVKRK. Ser-442 carries the phosphoserine modification. Residues 446 to 451 carry the Nuclear localization signal motif; the sequence is KRKRAV. A phosphoserine mark is found at Ser-455 and Ser-459. Residues 461–588 enclose the LTD domain; the sequence is ADYYVSASAK…RIVSQHTSSS (128 aa). Ser-595 carries the post-translational modification Phosphoserine. Thr-597 is modified (phosphothreonine). Positions 603-622 are disordered; that stretch reads EQLYHQQGDPQQSNEKCAIM. Over residues 605–622 the composition is skewed to polar residues; sequence LYHQQGDPQQSNEKCAIM. Ser-615 bears the Phosphoserine mark. A Cysteine methyl ester modification is found at Cys-619. Cys-619 carries S-farnesyl cysteine lipidation. The propeptide at 620-622 is removed in mature form; the sequence is AIM.

It belongs to the intermediate filament family. As to quaternary structure, interacts directly with LBR. Interacts with MAN1. Interacts with Ote. In terms of processing, three forms of lamin have been identified in D.melanogaster, lamin Dm0 is rapidly processed to lamin Dm1 in the cytoplasm, Dm1 is then assembled in the nuclear envelope and is then phosphorylated, forming lamin Dm2. Constitutively expressed in all tissues (at protein level). Expressed in spermatocytes (at protein level).

It is found in the nucleus. It localises to the nucleus inner membrane. The protein localises to the nucleus envelope. Its subcellular location is the nucleus lamina. The protein resides in the cytoplasm. It is found in the cytoskeleton. It localises to the spindle pole. In terms of biological role, lamins are components of the nuclear lamina, a fibrous layer on the nucleoplasmic side of the inner nuclear membrane, which is thought to provide a framework for the nuclear envelope and may also interact with chromatin. May have a role in the localization of the LEM domain proteins Ote, bocks and MAN1 to the nuclear membrane. In spermatocytes, plays a role in maintaining type-A lamin LamC nuclear localization; regulates meiotic cytokinesis by maintaining the structure of the spindle envelope, and by contributing to the formation of the contractile ring and central spindle. Required for nuclear migration and to link the microtubule organizing center (MTOC) to the nucleus. In addition, is required for nuclear envelope localization of klar. In Drosophila melanogaster (Fruit fly), this protein is Lamin Dm0.